We begin with the raw amino-acid sequence, 356 residues long: Protein RecA (356 aa).

ATP is bound at residue 68 to 75 (GQESSGKT).

It belongs to the RecA family.

The protein resides in the cytoplasm. Its function is as follows. Can catalyze the hydrolysis of ATP in the presence of single-stranded DNA, the ATP-dependent uptake of single-stranded DNA by duplex DNA, and the ATP-dependent hybridization of homologous single-stranded DNAs. It interacts with LexA causing its activation and leading to its autocatalytic cleavage. This chain is Protein RecA, found in Thermotoga sp. (strain RQ2).